Consider the following 305-residue polypeptide: Protoheme IX farnesyltransferase (305 aa).

9 helical membrane passes run 31 to 51 (VMSL…YSVH), 52 to 72 (PFIA…AGAI), 102 to 119 (ALSF…FMAL), 123 to 145 (LLAS…IWLK), 151 to 171 (NIVI…AAVS), 179 to 199 (IILF…LALF), 225 to 245 (ILIY…IGMN), 247 to 267 (FIYL…SGSL), and 284 to 304 (SIFY…ISLI).

This sequence belongs to the UbiA prenyltransferase family. Protoheme IX farnesyltransferase subfamily.

Its subcellular location is the cell inner membrane. The enzyme catalyses heme b + (2E,6E)-farnesyl diphosphate + H2O = Fe(II)-heme o + diphosphate. Its pathway is porphyrin-containing compound metabolism; heme O biosynthesis; heme O from protoheme: step 1/1. Its function is as follows. Converts heme B (protoheme IX) to heme O by substitution of the vinyl group on carbon 2 of heme B porphyrin ring with a hydroxyethyl farnesyl side group. The protein is Protoheme IX farnesyltransferase of Rickettsia felis (strain ATCC VR-1525 / URRWXCal2) (Rickettsia azadi).